Reading from the N-terminus, the 567-residue chain is Dihydroxy-acid dehydratase (567 aa).

[2Fe-2S] cluster is bound at residue Cys-52. Asp-84 is a binding site for Mg(2+). A [2Fe-2S] cluster-binding site is contributed by Cys-125. 2 residues coordinate Mg(2+): Asp-126 and Lys-127. Residue Lys-127 is modified to N6-carboxylysine. Residue Cys-197 participates in [2Fe-2S] cluster binding. Mg(2+) is bound at residue Glu-448. Ser-474 acts as the Proton acceptor in catalysis.

The protein belongs to the IlvD/Edd family. In terms of assembly, homodimer. It depends on [2Fe-2S] cluster as a cofactor. Mg(2+) is required as a cofactor.

The catalysed reaction is (2R)-2,3-dihydroxy-3-methylbutanoate = 3-methyl-2-oxobutanoate + H2O. It carries out the reaction (2R,3R)-2,3-dihydroxy-3-methylpentanoate = (S)-3-methyl-2-oxopentanoate + H2O. It functions in the pathway amino-acid biosynthesis; L-isoleucine biosynthesis; L-isoleucine from 2-oxobutanoate: step 3/4. Its pathway is amino-acid biosynthesis; L-valine biosynthesis; L-valine from pyruvate: step 3/4. Its function is as follows. Functions in the biosynthesis of branched-chain amino acids. Catalyzes the dehydration of (2R,3R)-2,3-dihydroxy-3-methylpentanoate (2,3-dihydroxy-3-methylvalerate) into 2-oxo-3-methylpentanoate (2-oxo-3-methylvalerate) and of (2R)-2,3-dihydroxy-3-methylbutanoate (2,3-dihydroxyisovalerate) into 2-oxo-3-methylbutanoate (2-oxoisovalerate), the penultimate precursor to L-isoleucine and L-valine, respectively. The polypeptide is Dihydroxy-acid dehydratase (Streptococcus pneumoniae (strain CGSP14)).